We begin with the raw amino-acid sequence, 93 residues long: Acylphosphatase (93 aa).

The Acylphosphatase-like domain occupies arginine 5 to serine 91. Active-site residues include arginine 20 and asparagine 38.

The protein belongs to the acylphosphatase family.

It carries out the reaction an acyl phosphate + H2O = a carboxylate + phosphate + H(+). The sequence is that of Acylphosphatase (acyP) from Moorella thermoacetica (strain ATCC 39073 / JCM 9320).